Here is a 592-residue protein sequence, read N- to C-terminus: MGLCVEENITMLQKRSDTLDRLRHSLAHVMAEAVQALFPGTKLAVGPPIDYGFYYDFSPPRPLCDADLAPIEEKMRAILRAGCPFVKEVVSRPDALARFKDEPFKQELIERISADDTLSLYHSGAFTDLCRGPHVQSMRDINPHAFKLTSIAGAYWRGNERGPQLTRIYGTAWESEEDLHTYLRMQDEAKRRDHRKLGPALGLFHLDEENPGQVFWHPEGWTLYVAIQQYLRRVMHEDGYAEVHTPFVMPQSLWERSGHWDKYRANMYLTEGEKRSFALKPMNCPGHVEIFKQKTRSYRDLPLRLSEFGSCTRNEPSGSLHGVMRVRGFVQDDAHIFCTEAQIASEVTRFCRLLARVYADFGFAQEQIRVKFSTRPEQRIGDDATWDRAERALAEACEAAGLSYEHAPGEGAFYGPKLEFALIDTLEREWQCGTIQVDYQLPSCERLNAEYVGEDNQRHMPVILHRTVIGSLERFIGILIEHYGGAFPPWLAPVQAVVIPVAPAFLEYAQHVARELCARSLRVQADVSAERMNAKIRTAQTQKVPYLLIVGERELRAQQVAVRPRTGPQHSMGLSAFSTFLLAKLETRALHA.

The segment at 193 to 488 (DHRKLGPALG…LIEHYGGAFP (296 aa)) is catalytic. Positions 284, 335, and 465 each coordinate Zn(2+).

This sequence belongs to the class-II aminoacyl-tRNA synthetase family. Homodimer. Zn(2+) is required as a cofactor.

Its subcellular location is the cytoplasm. It carries out the reaction tRNA(Thr) + L-threonine + ATP = L-threonyl-tRNA(Thr) + AMP + diphosphate + H(+). Functionally, catalyzes the attachment of threonine to tRNA(Thr) in a two-step reaction: L-threonine is first activated by ATP to form Thr-AMP and then transferred to the acceptor end of tRNA(Thr). Also edits incorrectly charged L-seryl-tRNA(Thr). This Treponema pallidum (strain Nichols) protein is Threonine--tRNA ligase.